The primary structure comprises 434 residues: Enolase (434 aa).

Positions S29–K56 are disordered. Over residues E47–K56 the composition is skewed to basic and acidic residues. (2R)-2-phosphoglycerate is bound at residue Q163. The active-site Proton donor is the E205. 3 residues coordinate Mg(2+): D242, E285, and D312. (2R)-2-phosphoglycerate-binding residues include K337, R366, S367, and K388. The Proton acceptor role is filled by K337.

Belongs to the enolase family. In terms of assembly, homooctamer. Requires Mg(2+) as cofactor.

Its subcellular location is the cytoplasm. The protein resides in the secreted. The protein localises to the cell surface. The catalysed reaction is (2R)-2-phosphoglycerate = phosphoenolpyruvate + H2O. It participates in carbohydrate degradation; glycolysis; pyruvate from D-glyceraldehyde 3-phosphate: step 4/5. Its function is as follows. Catalyzes the reversible conversion of 2-phosphoglycerate (2-PG) into phosphoenolpyruvate (PEP). It is essential for the degradation of carbohydrates via glycolysis. The polypeptide is Enolase (Nitratidesulfovibrio vulgaris (strain DSM 19637 / Miyazaki F) (Desulfovibrio vulgaris)).